Here is a 377-residue protein sequence, read N- to C-terminus: Chaperone protein DnaJ (377 aa).

Residues 4-69 enclose the J domain; the sequence is DYYEALGVTR…QKRAAYDRFG (66 aa). The CR-type zinc finger occupies 135–213; that stretch reads GKTAQIRVPT…CHGQGRVTQE (79 aa). Zn(2+) contacts are provided by cysteine 148, cysteine 151, cysteine 165, cysteine 168, cysteine 187, cysteine 190, cysteine 201, and cysteine 204. 4 CXXCXGXG motif repeats span residues 148 to 155, 165 to 172, 187 to 194, and 201 to 208; these read CDECSGSG, CTMCSGSG, CPGCNGRG, and CEKCHGQG.

The protein belongs to the DnaJ family. Homodimer. It depends on Zn(2+) as a cofactor.

The protein localises to the cytoplasm. In terms of biological role, participates actively in the response to hyperosmotic and heat shock by preventing the aggregation of stress-denatured proteins and by disaggregating proteins, also in an autonomous, DnaK-independent fashion. Unfolded proteins bind initially to DnaJ; upon interaction with the DnaJ-bound protein, DnaK hydrolyzes its bound ATP, resulting in the formation of a stable complex. GrpE releases ADP from DnaK; ATP binding to DnaK triggers the release of the substrate protein, thus completing the reaction cycle. Several rounds of ATP-dependent interactions between DnaJ, DnaK and GrpE are required for fully efficient folding. Also involved, together with DnaK and GrpE, in the DNA replication of plasmids through activation of initiation proteins. The polypeptide is Chaperone protein DnaJ (Brucella abortus (strain S19)).